The primary structure comprises 232 residues: 2,3,4,5-tetrahydropyridine-2,6-dicarboxylate N-acetyltransferase (232 aa).

Belongs to the transferase hexapeptide repeat family. DapH subfamily.

It carries out the reaction (S)-2,3,4,5-tetrahydrodipicolinate + acetyl-CoA + H2O = L-2-acetamido-6-oxoheptanedioate + CoA. The protein operates within amino-acid biosynthesis; L-lysine biosynthesis via DAP pathway; LL-2,6-diaminopimelate from (S)-tetrahydrodipicolinate (acetylase route): step 1/3. In terms of biological role, catalyzes the transfer of an acetyl group from acetyl-CoA to tetrahydrodipicolinate. This is 2,3,4,5-tetrahydropyridine-2,6-dicarboxylate N-acetyltransferase from Streptococcus pneumoniae serotype 4 (strain ATCC BAA-334 / TIGR4).